A 62-amino-acid chain; its full sequence is Large ribosomal subunit protein bL28 (62 aa).

Belongs to the bacterial ribosomal protein bL28 family.

The chain is Large ribosomal subunit protein bL28 from Wolinella succinogenes (strain ATCC 29543 / DSM 1740 / CCUG 13145 / JCM 31913 / LMG 7466 / NCTC 11488 / FDC 602W) (Vibrio succinogenes).